The following is a 298-amino-acid chain: Lipoyl synthase (298 aa).

[4Fe-4S] cluster contacts are provided by Cys-40, Cys-45, Cys-51, Cys-67, Cys-71, Cys-74, and Ser-280. One can recognise a Radical SAM core domain in the interval 53-269 (AVRKTATFMI…KEIALSKGFS (217 aa)).

The protein belongs to the radical SAM superfamily. Lipoyl synthase family. It depends on [4Fe-4S] cluster as a cofactor.

It localises to the cytoplasm. It catalyses the reaction [[Fe-S] cluster scaffold protein carrying a second [4Fe-4S](2+) cluster] + N(6)-octanoyl-L-lysyl-[protein] + 2 oxidized [2Fe-2S]-[ferredoxin] + 2 S-adenosyl-L-methionine + 4 H(+) = [[Fe-S] cluster scaffold protein] + N(6)-[(R)-dihydrolipoyl]-L-lysyl-[protein] + 4 Fe(3+) + 2 hydrogen sulfide + 2 5'-deoxyadenosine + 2 L-methionine + 2 reduced [2Fe-2S]-[ferredoxin]. It functions in the pathway protein modification; protein lipoylation via endogenous pathway; protein N(6)-(lipoyl)lysine from octanoyl-[acyl-carrier-protein]. Catalyzes the radical-mediated insertion of two sulfur atoms into the C-6 and C-8 positions of the octanoyl moiety bound to the lipoyl domains of lipoate-dependent enzymes, thereby converting the octanoylated domains into lipoylated derivatives. The sequence is that of Lipoyl synthase from Bacillus thuringiensis (strain Al Hakam).